Consider the following 743-residue polypeptide: Polyribonucleotide nucleotidyltransferase (743 aa).

Positions 494 and 500 each coordinate Mg(2+). The region spanning 561-620 (PQHAEVFVNPDIIRLIIGPGGKNIKAITAATGASVDIEDSGRVSIFAPTAEALEKAREMV) is the KH domain. The 75-residue stretch at 630 to 704 (GKNYNAKVRK…SRKAVLLEEQ (75 aa)) folds into the S1 motif domain. The segment at 702–743 (EEQGHPWNPEDTARPQRSDRGDRGDRRGDRGGRDRRDRGDRR) is disordered. The span at 712-743 (DTARPQRSDRGDRGDRRGDRGGRDRRDRGDRR) shows a compositional bias: basic and acidic residues.

The protein belongs to the polyribonucleotide nucleotidyltransferase family. Requires Mg(2+) as cofactor.

The protein resides in the cytoplasm. It catalyses the reaction RNA(n+1) + phosphate = RNA(n) + a ribonucleoside 5'-diphosphate. Involved in mRNA degradation. Catalyzes the phosphorolysis of single-stranded polyribonucleotides processively in the 3'- to 5'-direction. The polypeptide is Polyribonucleotide nucleotidyltransferase (Desulfovibrio desulfuricans (strain ATCC 27774 / DSM 6949 / MB)).